A 170-amino-acid polypeptide reads, in one-letter code: ATP synthase subunit b (170 aa).

Residues 22–44 form a helical membrane-spanning segment; that stretch reads IINLAVVVFGLYKFLPGFLGKIL.

It belongs to the ATPase B chain family. In terms of assembly, F-type ATPases have 2 components, F(1) - the catalytic core - and F(0) - the membrane proton channel. F(1) has five subunits: alpha(3), beta(3), gamma(1), delta(1), epsilon(1). F(0) has four main subunits: a(1), b(1), b'(1) and c(10-14). The alpha and beta chains form an alternating ring which encloses part of the gamma chain. F(1) is attached to F(0) by a central stalk formed by the gamma and epsilon chains, while a peripheral stalk is formed by the delta, b and b' chains.

It localises to the cellular thylakoid membrane. Functionally, f(1)F(0) ATP synthase produces ATP from ADP in the presence of a proton or sodium gradient. F-type ATPases consist of two structural domains, F(1) containing the extramembraneous catalytic core and F(0) containing the membrane proton channel, linked together by a central stalk and a peripheral stalk. During catalysis, ATP synthesis in the catalytic domain of F(1) is coupled via a rotary mechanism of the central stalk subunits to proton translocation. In terms of biological role, component of the F(0) channel, it forms part of the peripheral stalk, linking F(1) to F(0). This is ATP synthase subunit b from Prochlorococcus marinus (strain NATL1A).